Here is a 437-residue protein sequence, read N- to C-terminus: Phosphomethylpyrimidine synthase (437 aa).

Residues Asn69, Met98, Tyr127, His163, 185-187 (SRG), 226-229 (DACR), and Glu265 contribute to the substrate site. His269 contributes to the Zn(2+) binding site. Position 292 (Tyr292) interacts with substrate. Position 333 (His333) interacts with Zn(2+). Residues Cys409, Cys412, and Cys416 each coordinate [4Fe-4S] cluster.

This sequence belongs to the ThiC family. The cofactor is [4Fe-4S] cluster.

It catalyses the reaction 5-amino-1-(5-phospho-beta-D-ribosyl)imidazole + S-adenosyl-L-methionine = 4-amino-2-methyl-5-(phosphooxymethyl)pyrimidine + CO + 5'-deoxyadenosine + formate + L-methionine + 3 H(+). Its pathway is cofactor biosynthesis; thiamine diphosphate biosynthesis. Functionally, catalyzes the synthesis of the hydroxymethylpyrimidine phosphate (HMP-P) moiety of thiamine from aminoimidazole ribotide (AIR) in a radical S-adenosyl-L-methionine (SAM)-dependent reaction. The chain is Phosphomethylpyrimidine synthase from Clostridium botulinum (strain Kyoto / Type A2).